A 232-amino-acid chain; its full sequence is Large ribosomal subunit protein uL1 (232 aa).

Belongs to the universal ribosomal protein uL1 family. Part of the 50S ribosomal subunit.

Functionally, binds directly to 23S rRNA. The L1 stalk is quite mobile in the ribosome, and is involved in E site tRNA release. In terms of biological role, protein L1 is also a translational repressor protein, it controls the translation of the L11 operon by binding to its mRNA. This is Large ribosomal subunit protein uL1 from Paraburkholderia phytofirmans (strain DSM 17436 / LMG 22146 / PsJN) (Burkholderia phytofirmans).